Reading from the N-terminus, the 429-residue chain is Bifunctional protein GlmU (429 aa).

The tract at residues 1-223 (MKTSILILAA…EDEFMGINDK (223 aa)) is pyrophosphorylase. UDP-N-acetyl-alpha-D-glucosamine-binding positions include 8–11 (LAAG), Lys22, and 81–82 (GT). Asp102 contacts Mg(2+). Positions 135, 149, 164, and 221 each coordinate UDP-N-acetyl-alpha-D-glucosamine. Residue Asn221 participates in Mg(2+) binding. The segment at 224 to 244 (FELSIAENFMQEKIKKYWMQQ) is linker. An N-acetyltransferase region spans residues 245–429 (GVIFHLPQST…KDYYYKKFQK (185 aa)). The UDP-N-acetyl-alpha-D-glucosamine site is built by Arg308 and Lys325. His336 functions as the Proton acceptor in the catalytic mechanism. UDP-N-acetyl-alpha-D-glucosamine is bound by residues Tyr339 and Asn350. Residues 359-360 (NY), Ser378, Ala396, and Arg413 contribute to the acetyl-CoA site.

The protein in the N-terminal section; belongs to the N-acetylglucosamine-1-phosphate uridyltransferase family. It in the C-terminal section; belongs to the transferase hexapeptide repeat family. As to quaternary structure, homotrimer. Requires Mg(2+) as cofactor.

It is found in the cytoplasm. The catalysed reaction is alpha-D-glucosamine 1-phosphate + acetyl-CoA = N-acetyl-alpha-D-glucosamine 1-phosphate + CoA + H(+). It catalyses the reaction N-acetyl-alpha-D-glucosamine 1-phosphate + UTP + H(+) = UDP-N-acetyl-alpha-D-glucosamine + diphosphate. Its pathway is nucleotide-sugar biosynthesis; UDP-N-acetyl-alpha-D-glucosamine biosynthesis; N-acetyl-alpha-D-glucosamine 1-phosphate from alpha-D-glucosamine 6-phosphate (route II): step 2/2. It functions in the pathway nucleotide-sugar biosynthesis; UDP-N-acetyl-alpha-D-glucosamine biosynthesis; UDP-N-acetyl-alpha-D-glucosamine from N-acetyl-alpha-D-glucosamine 1-phosphate: step 1/1. The protein operates within bacterial outer membrane biogenesis; LPS lipid A biosynthesis. Catalyzes the last two sequential reactions in the de novo biosynthetic pathway for UDP-N-acetylglucosamine (UDP-GlcNAc). The C-terminal domain catalyzes the transfer of acetyl group from acetyl coenzyme A to glucosamine-1-phosphate (GlcN-1-P) to produce N-acetylglucosamine-1-phosphate (GlcNAc-1-P), which is converted into UDP-GlcNAc by the transfer of uridine 5-monophosphate (from uridine 5-triphosphate), a reaction catalyzed by the N-terminal domain. The polypeptide is Bifunctional protein GlmU (Campylobacter jejuni (strain RM1221)).